The chain runs to 65 residues: Translational regulator CsrA (65 aa).

This sequence belongs to the CsrA/RsmA family. In terms of assembly, homodimer; the beta-strands of each monomer intercalate to form a hydrophobic core, while the alpha-helices form wings that extend away from the core.

It localises to the cytoplasm. In terms of biological role, a key translational regulator that binds mRNA to regulate translation initiation and/or mRNA stability. Mediates global changes in gene expression, shifting from rapid growth to stress survival by linking envelope stress, the stringent response and the catabolite repression systems. Usually binds in the 5'-UTR; binding at or near the Shine-Dalgarno sequence prevents ribosome-binding, repressing translation, binding elsewhere in the 5'-UTR can activate translation and/or stabilize the mRNA. Its function is antagonized by small RNA(s). The polypeptide is Translational regulator CsrA (Pseudomonas putida (strain ATCC 47054 / DSM 6125 / CFBP 8728 / NCIMB 11950 / KT2440)).